The sequence spans 217 residues: uncharacterized protein (217 aa).

Residues 1 to 32 are disordered; sequence MTLKKHRGKMSEKSNVNKKFTNSTQNNSNWSN. The span at 22-32 shows a compositional bias: low complexity; the sequence is NSTQNNSNWSN.

This is an uncharacterized protein from Acidianus filamentous virus 2 (isolate Italy/Pozzuoli) (AFV-2).